Here is a 137-residue protein sequence, read N- to C-terminus: Large-conductance mechanosensitive channel (137 aa).

A run of 2 helical transmembrane segments spans residues 9–29 (AFAVKGNVVDMAVGIIIGAAF) and 79–99 (IQTILDFIIVAFAIFMGVKVI).

The protein belongs to the MscL family. As to quaternary structure, homopentamer.

It localises to the cell inner membrane. In terms of biological role, channel that opens in response to stretch forces in the membrane lipid bilayer. May participate in the regulation of osmotic pressure changes within the cell. This is Large-conductance mechanosensitive channel from Pseudomonas entomophila (strain L48).